The following is a 51-amino-acid chain: Sperm protamine P1 (51 aa).

Cystine bridges form between Cys7/Cys15 and Cys38/Cys48.

It belongs to the protamine P1 family. Cross-linked by interchain disulfide bonds around the DNA-helix. In terms of processing, phosphorylated by SRPK1. As to expression, testis.

It localises to the nucleus. The protein localises to the chromosome. Protamines substitute for histones in the chromatin of sperm during the haploid phase of spermatogenesis. They compact sperm DNA into a highly condensed, stable and inactive complex. The chain is Sperm protamine P1 (Prm1) from Rattus norvegicus (Rat).